We begin with the raw amino-acid sequence, 101 residues long: Small ribosomal subunit protein uS10 (101 aa).

This sequence belongs to the universal ribosomal protein uS10 family. Part of the 30S ribosomal subunit.

In terms of biological role, involved in the binding of tRNA to the ribosomes. In Ureaplasma parvum serovar 3 (strain ATCC 27815 / 27 / NCTC 11736), this protein is Small ribosomal subunit protein uS10.